A 451-amino-acid polypeptide reads, in one-letter code: UDP-N-acetylmuramoylalanine--D-glutamate ligase (451 aa).

116–122 contributes to the ATP binding site; sequence GTNGKTT.

The protein belongs to the MurCDEF family.

It localises to the cytoplasm. The catalysed reaction is UDP-N-acetyl-alpha-D-muramoyl-L-alanine + D-glutamate + ATP = UDP-N-acetyl-alpha-D-muramoyl-L-alanyl-D-glutamate + ADP + phosphate + H(+). Its pathway is cell wall biogenesis; peptidoglycan biosynthesis. In terms of biological role, cell wall formation. Catalyzes the addition of glutamate to the nucleotide precursor UDP-N-acetylmuramoyl-L-alanine (UMA). This is UDP-N-acetylmuramoylalanine--D-glutamate ligase from Clostridioides difficile (strain 630) (Peptoclostridium difficile).